The chain runs to 173 residues: Interferon gamma (173 aa).

The signal sequence occupies residues 1–22 (MNATHCILALQLCLLAISGCSS). At Q23 the chain carries Pyrrolidone carboxylic acid. N-linked (GlcNAc...) asparagine glycans are attached at residues N38 and N105.

Belongs to the type II (or gamma) interferon family. In terms of assembly, homodimer. Interacts with IFNGR1 (via extracellular domain); this interaction promotes IFNGR1 dimerization. In terms of tissue distribution, released primarily from activated T lymphocytes.

The protein resides in the secreted. Its function is as follows. Type II interferon produced by immune cells such as T-cells and NK cells that plays crucial roles in antimicrobial, antiviral, and antitumor responses by activating effector immune cells and enhancing antigen presentation. Primarily signals through the JAK-STAT pathway after interaction with its receptor IFNGR1 to affect gene regulation. Upon IFNG binding, IFNGR1 intracellular domain opens out to allow association of downstream signaling components JAK2, JAK1 and STAT1, leading to STAT1 activation, nuclear translocation and transcription of IFNG-regulated genes. Many of the induced genes are transcription factors such as IRF1 that are able to further drive regulation of a next wave of transcription. Plays a role in class I antigen presentation pathway by inducing a replacement of catalytic proteasome subunits with immunoproteasome subunits. In turn, increases the quantity, quality, and repertoire of peptides for class I MHC loading. Increases the efficiency of peptide generation also by inducing the expression of activator PA28 that associates with the proteasome and alters its proteolytic cleavage preference. Up-regulates as well MHC II complexes on the cell surface by promoting expression of several key molecules such as cathepsins B/CTSB, H/CTSH, and L/CTSL. Participates in the regulation of hematopoietic stem cells during development and under homeostatic conditions by affecting their development, quiescence, and differentiation. This is Interferon gamma (IFNG) from Meriones unguiculatus (Mongolian jird).